The primary structure comprises 445 residues: Phosphoglucosamine mutase (445 aa).

Catalysis depends on S102, which acts as the Phosphoserine intermediate. Residues S102, D241, D243, and D245 each contribute to the Mg(2+) site. S102 is modified (phosphoserine).

The protein belongs to the phosphohexose mutase family. The cofactor is Mg(2+). Activated by phosphorylation.

The catalysed reaction is alpha-D-glucosamine 1-phosphate = D-glucosamine 6-phosphate. Its function is as follows. Catalyzes the conversion of glucosamine-6-phosphate to glucosamine-1-phosphate. This Escherichia coli O157:H7 protein is Phosphoglucosamine mutase.